A 125-amino-acid polypeptide reads, in one-letter code: Small ribosomal subunit protein bS6 (125 aa).

The protein belongs to the bacterial ribosomal protein bS6 family.

Its function is as follows. Binds together with bS18 to 16S ribosomal RNA. The chain is Small ribosomal subunit protein bS6 from Campylobacter jejuni (strain RM1221).